A 233-amino-acid polypeptide reads, in one-letter code: Lectin (233 aa).

N-linked (GlcNAc...) asparagine glycosylation is found at Asn-26 and Asn-108. Mn(2+) is bound by residues Glu-118 and Asp-120. Positions 120, 122, 124, and 129 each coordinate Ca(2+). 2 residues coordinate Mn(2+): Glu-129 and His-134.

It belongs to the leguminous lectin family. In terms of assembly, monomer.

The protein localises to the secreted. In terms of biological role, has metal-independent hemagglutinating activity towards erythrocytes from rabbit and human. Hemagglutinating activity is inhibited by glycoproteins fetuin, asialo-fetuin, thyroglobulin and azocasein but not by free carbohydrates. Inhibits ADP- and epinephrin-induced but not collagen-, fibrinogen, thrombin- or arachidonic acid-induced platelet aggregation in vitro. Has anticoagulant activity in vitro. The sequence is that of Lectin from Bauhinia forficata (Brazilian orchid-tree).